The sequence spans 456 residues: MGQTLFDKVWNRHVLYGKLGEPQLLYIDLHLIHEVTSPQAFEGLRLQNRKLRRPDLTFATLDHNVPTIDIFNIKDEIANKQITTLQKNAIDFGVHIFDMGSDEQGIVHMVGPETGLTQPGKTIVCGDSHTATHGAFGAIAFGIGTSEVEHVFATQTLWQTKPKNLKIDINGTLPTGVYAKDIILHLIKTYGVDFGTGYALEFTGETIKNLSMDGRMTICNMAIEGGAKYGIIQPDDITFEYVKGRPFADNFAKSVDKWRELYSDDDAIFDRVIELDVSTLEPQVTWGTNPEMGVNFSEPFPEINDINDQRAYDYMGLEPGQKAEDIDLGYVFLGSCTNARLSDLIEASHIVKGNKVHPNITAIVVPGSRTVKKEAEKLGLDTIFKNAGFEWREPGCSMCLGMNPDQVPEGVHCASTSNRNFEGRQGKGARTHLVSPAMAAAAAIHGKFVDVRKVVV.

[4Fe-4S] cluster contacts are provided by C336, C396, and C399.

It belongs to the aconitase/IPM isomerase family. LeuC type 1 subfamily. In terms of assembly, heterodimer of LeuC and LeuD. [4Fe-4S] cluster serves as cofactor.

The catalysed reaction is (2R,3S)-3-isopropylmalate = (2S)-2-isopropylmalate. It functions in the pathway amino-acid biosynthesis; L-leucine biosynthesis; L-leucine from 3-methyl-2-oxobutanoate: step 2/4. In terms of biological role, catalyzes the isomerization between 2-isopropylmalate and 3-isopropylmalate, via the formation of 2-isopropylmaleate. This chain is 3-isopropylmalate dehydratase large subunit, found in Staphylococcus aureus (strain JH1).